The sequence spans 380 residues: NF-kappa-B inhibitor-like protein 1 (380 aa).

Positions 1–34 are disordered; that stretch reads MSNPSPQVPEGEASTSVCRPKSSMASTSRRQRRE. Over residues 13 to 28 the composition is skewed to polar residues; the sequence is ASTSVCRPKSSMASTS. 2 ANK repeats span residues 64 to 93 and 97 to 133; these read GQPPPLHRACARHDAPALCLLLRLGADPAH and HGDTALHAAARQGPDAYTDFFLPLLSRCPSAMGIKNK. Disordered regions lie at residues 131–167 and 185–293; these read KNKDGETPGQILGWGPPWDSAEEEEEDEASKEREWRQ and EDDA…RGSL. At Ser-150 the chain carries Phosphoserine. Acidic residues predominate over residues 150–159; sequence SAEEEEEDEA. 2 stretches are compositionally biased toward basic and acidic residues: residues 204–221 and 236–272; these read RMAREHAQKRQQQRETEG and RQQEEEQRLFRERARAKEEELRESQARRAQEAPRDPV.

Interacts with CACTIN (via N-terminal domain); the interaction occurs in a pro-inflammatory-independent manner.

The protein resides in the nucleus. Its function is as follows. Involved in the regulation of innate immune response. Acts as negative regulator of Toll-like receptor and interferon-regulatory factor (IRF) signaling pathways. Contributes to the negative regulation of transcriptional activation of NF-kappa-B target genes in response to endogenous pro-inflammatory stimuli. The protein is NF-kappa-B inhibitor-like protein 1 (NFKBIL1) of Sus scrofa (Pig).